Consider the following 270-residue polypeptide: Protein-ADP-ribose hydrolase (270 aa).

The 195-residue stretch at 73–267 (VSVKDCQKTN…LYDTYLQKEN (195 aa)) folds into the Macro domain. ADP-D-ribose contacts are provided by Asp92, Ile93, and Asn106. The Zn(2+) site is built by Cys112, His117, and Cys119. Residues Cys119, Ile120, Asp121, Ser212, Thr213, Gly214, Glu215, and Phe216 each coordinate ADP-D-ribose.

The protein belongs to the MacroD-type family. Zn-Macro subfamily. It depends on Zn(2+) as a cofactor.

It catalyses the reaction 4-O-(ADP-D-ribosyl)-L-aspartyl-[protein] + H2O = L-aspartyl-[protein] + ADP-D-ribose + H(+). Its function is as follows. ADP-ribosylhydrolase that specifically reverses the SirTM-mediated mono-ADP-ribosylation at an asparatate residue of GcvH-L, by releasing ADP-ribose from the target protein. May play a role in the regulation of the response to host-induced oxidative stress. This Streptococcus pyogenes serotype M3 (strain ATCC BAA-595 / MGAS315) protein is Protein-ADP-ribose hydrolase.